The following is a 563-amino-acid chain: Arginine--tRNA ligase (563 aa).

Positions 121–131 (PNIAKPFSIGH) match the 'HIGH' region motif.

The protein belongs to the class-I aminoacyl-tRNA synthetase family. As to quaternary structure, monomer.

Its subcellular location is the cytoplasm. The catalysed reaction is tRNA(Arg) + L-arginine + ATP = L-arginyl-tRNA(Arg) + AMP + diphosphate. In Streptococcus pyogenes serotype M6 (strain ATCC BAA-946 / MGAS10394), this protein is Arginine--tRNA ligase.